The following is a 349-amino-acid chain: UDP-3-O-acylglucosamine N-acyltransferase (349 aa).

His246 acts as the Proton acceptor in catalysis.

This sequence belongs to the transferase hexapeptide repeat family. LpxD subfamily. As to quaternary structure, homotrimer.

The catalysed reaction is a UDP-3-O-[(3R)-3-hydroxyacyl]-alpha-D-glucosamine + a (3R)-hydroxyacyl-[ACP] = a UDP-2-N,3-O-bis[(3R)-3-hydroxyacyl]-alpha-D-glucosamine + holo-[ACP] + H(+). Its pathway is bacterial outer membrane biogenesis; LPS lipid A biosynthesis. Its function is as follows. Catalyzes the N-acylation of UDP-3-O-acylglucosamine using 3-hydroxyacyl-ACP as the acyl donor. Is involved in the biosynthesis of lipid A, a phosphorylated glycolipid that anchors the lipopolysaccharide to the outer membrane of the cell. The chain is UDP-3-O-acylglucosamine N-acyltransferase from Protochlamydia amoebophila (strain UWE25).